The primary structure comprises 197 residues: Imidazoleglycerol-phosphate dehydratase (197 aa).

Belongs to the imidazoleglycerol-phosphate dehydratase family.

The protein localises to the cytoplasm. The catalysed reaction is D-erythro-1-(imidazol-4-yl)glycerol 3-phosphate = 3-(imidazol-4-yl)-2-oxopropyl phosphate + H2O. The protein operates within amino-acid biosynthesis; L-histidine biosynthesis; L-histidine from 5-phospho-alpha-D-ribose 1-diphosphate: step 6/9. In Rhodopseudomonas palustris (strain ATCC BAA-98 / CGA009), this protein is Imidazoleglycerol-phosphate dehydratase.